The chain runs to 343 residues: Succinylglutamate desuccinylase (343 aa).

Zn(2+)-binding residues include His60, Glu63, and His157. Glu221 is a catalytic residue.

The protein belongs to the AspA/AstE family. Succinylglutamate desuccinylase subfamily. Requires Zn(2+) as cofactor.

The catalysed reaction is N-succinyl-L-glutamate + H2O = L-glutamate + succinate. Its pathway is amino-acid degradation; L-arginine degradation via AST pathway; L-glutamate and succinate from L-arginine: step 5/5. Its function is as follows. Transforms N(2)-succinylglutamate into succinate and glutamate. This is Succinylglutamate desuccinylase from Idiomarina loihiensis (strain ATCC BAA-735 / DSM 15497 / L2-TR).